Reading from the N-terminus, the 406-residue chain is Tyrosine--tRNA ligase (406 aa).

Tyrosine 35 serves as a coordination point for L-tyrosine. The 'HIGH' region motif lies at 40 to 49; that stretch reads ATSASLHIGH. L-tyrosine contacts are provided by tyrosine 167 and glutamine 171. The 'KMSKS' region motif lies at 227–231; that stretch reads KMGKS. Lysine 230 lines the ATP pocket. Residues 341–405 enclose the S4 RNA-binding domain; it reads ILLVDLMVLA…IGKKKILRIV (65 aa).

The protein belongs to the class-I aminoacyl-tRNA synthetase family. TyrS type 1 subfamily. In terms of assembly, homodimer.

It is found in the cytoplasm. It catalyses the reaction tRNA(Tyr) + L-tyrosine + ATP = L-tyrosyl-tRNA(Tyr) + AMP + diphosphate + H(+). In terms of biological role, catalyzes the attachment of tyrosine to tRNA(Tyr) in a two-step reaction: tyrosine is first activated by ATP to form Tyr-AMP and then transferred to the acceptor end of tRNA(Tyr). In Borrelia recurrentis (strain A1), this protein is Tyrosine--tRNA ligase.